The following is a 377-amino-acid chain: All-trans-retinol dehydrogenase [NAD(+)] ADH4 (377 aa).

A Zn(2+)-binding site is contributed by C47. 48–49 (PT) provides a ligand contact to NAD(+). The Zn(2+) site is built by H68, C98, C101, C104, C112, and C179. Residues 204-209 (GLGCVG), D228, K233, 297-299 (VGA), 320-322 (TFF), and R372 each bind NAD(+).

Belongs to the zinc-containing alcohol dehydrogenase family. Class-II subfamily. As to quaternary structure, dimer. The cofactor is Zn(2+). In terms of tissue distribution, liver specific.

Its subcellular location is the cytoplasm. It catalyses the reaction all-trans-retinol + NAD(+) = all-trans-retinal + NADH + H(+). The catalysed reaction is 9-cis-retinol + NAD(+) = 9-cis-retinal + NADH + H(+). The enzyme catalyses 20-oxo-(5Z,8Z,11Z,14Z)-eicosatetraenoate + NAD(+) + H2O = (5Z,8Z,11Z,14Z)-eicosatetraenedioate + NADH + 2 H(+). It carries out the reaction 20-hydroxy-(5Z,8Z,11Z,14Z)-eicosatetraenoate + NAD(+) = 20-oxo-(5Z,8Z,11Z,14Z)-eicosatetraenoate + NADH + H(+). It catalyses the reaction 1,4-benzoquinone + NADH + H(+) = hydroquinone + NAD(+). Oxidation of 20-HETE is inhibited by low concentrations of N-heptylformamide. Oxidation of 20-HETE is a decreased by 55-65% by either all-trans-retinol or all-trans-retinoic acid. Strongly inhibited by omega-hydroxy fatty acids. Functionally, catalyzes the NAD-dependent oxidation of either all-trans-retinol or 9-cis-retinol. Also oxidizes long chain omega-hydroxy fatty acids, such as 20-HETE, producing both the intermediate aldehyde, 20-oxoarachidonate and the end product, a dicarboxylic acid, (5Z,8Z,11Z,14Z)-eicosatetraenedioate. Also catalyzes the reduction of benzoquinones. The sequence is that of All-trans-retinol dehydrogenase [NAD(+)] ADH4 from Rattus norvegicus (Rat).